Consider the following 229-residue polypeptide: Ribose-5-phosphate isomerase A (229 aa).

Substrate-binding positions include 28–31 (TGST), 85–88 (DGAD), and 98–101 (KGRG). Catalysis depends on E107, which acts as the Proton acceptor. K125 is a substrate binding site.

It belongs to the ribose 5-phosphate isomerase family. In terms of assembly, homodimer.

It catalyses the reaction aldehydo-D-ribose 5-phosphate = D-ribulose 5-phosphate. Its pathway is carbohydrate degradation; pentose phosphate pathway; D-ribose 5-phosphate from D-ribulose 5-phosphate (non-oxidative stage): step 1/1. Catalyzes the reversible conversion of ribose-5-phosphate to ribulose 5-phosphate. The protein is Ribose-5-phosphate isomerase A of Thermococcus kodakarensis (strain ATCC BAA-918 / JCM 12380 / KOD1) (Pyrococcus kodakaraensis (strain KOD1)).